The chain runs to 321 residues: tRNA-dihydrouridine synthase B (321 aa).

Residues 16–18 (PMA) and Gln-70 each bind FMN. Cys-100 (proton donor) is an active-site residue. Residues Lys-139, 200-202 (NGD), and 224-225 (GR) each bind FMN.

Belongs to the Dus family. DusB subfamily. FMN is required as a cofactor.

The catalysed reaction is a 5,6-dihydrouridine in tRNA + NAD(+) = a uridine in tRNA + NADH + H(+). It catalyses the reaction a 5,6-dihydrouridine in tRNA + NADP(+) = a uridine in tRNA + NADPH + H(+). Catalyzes the synthesis of 5,6-dihydrouridine (D), a modified base found in the D-loop of most tRNAs, via the reduction of the C5-C6 double bond in target uridines. The chain is tRNA-dihydrouridine synthase B from Salmonella typhi.